Here is a 181-residue protein sequence, read N- to C-terminus: Large ribosomal subunit protein uL16 (181 aa).

It belongs to the universal ribosomal protein uL16 family.

The polypeptide is Large ribosomal subunit protein uL16 (Pyrococcus abyssi (strain GE5 / Orsay)).